We begin with the raw amino-acid sequence, 232 residues long: Large ribosomal subunit protein uL1 (232 aa).

This sequence belongs to the universal ribosomal protein uL1 family. As to quaternary structure, part of the 50S ribosomal subunit.

In terms of biological role, binds directly to 23S rRNA. The L1 stalk is quite mobile in the ribosome, and is involved in E site tRNA release. Protein L1 is also a translational repressor protein, it controls the translation of the L11 operon by binding to its mRNA. In Cutibacterium acnes (strain DSM 16379 / KPA171202) (Propionibacterium acnes), this protein is Large ribosomal subunit protein uL1.